The following is a 141-amino-acid chain: Hemoglobin subunit alpha (141 aa).

The Globin domain occupies 1-141 (VLSPDDKKHV…VSTVLTSKYR (141 aa)). At S3 the chain carries Phosphoserine. 2 positions are modified to N6-succinyllysine: K7 and K11. K16 carries the post-translational modification N6-acetyllysine; alternate. Residue K16 is modified to N6-succinyllysine; alternate. Phosphotyrosine is present on Y24. At S35 the chain carries Phosphoserine. N6-succinyllysine is present on K40. Phosphoserine is present on S49. Position 58 (H58) interacts with O2. Residue H87 coordinates heme b. S102 is subject to Phosphoserine. A Phosphothreonine modification is found at T108. 2 positions are modified to phosphoserine: S124 and S131. Residues T134 and T137 each carry the phosphothreonine modification. S138 carries the post-translational modification Phosphoserine.

It belongs to the globin family. Heterotetramer of two alpha chains and two beta chains. As to expression, red blood cells.

Functionally, involved in oxygen transport from the lung to the various peripheral tissues. Its function is as follows. Hemopressin acts as an antagonist peptide of the cannabinoid receptor CNR1. Hemopressin-binding efficiently blocks cannabinoid receptor CNR1 and subsequent signaling. The chain is Hemoglobin subunit alpha (HBA) from Theropithecus gelada (Gelada baboon).